The following is a 666-amino-acid chain: Probable potassium transport system protein Kup (666 aa).

Helical transmembrane passes span 16-36 (GFIIALGIVYGDIGTSPLYTM), 58-78 (ISLIIWTLTLITTIKYVLIAL), 100-120 (PWLIVPAMIGGATLLSDGALT), 149-169 (IITTLVILIVLFGIQRFGTGF), 173-193 (IFGPVMFIWFSFLGVSGFFNM), 221-241 (IFILGSIFLATTGAEALYSDL), 253-273 (WPFVKMCIVLSYCGQAAWILA), 294-314 (VYLVSLATLAAIIASQALISG), 343-363 (LYIPVINWILFAVTSCTVLAF), 373-393 (YGLAITITMLMTTILLKYYLI), 399-419 (PILAHLVMAFFALVEFIFFLA), and 424-444 (FMHGGYAVVILALAIVFVMFI).

This sequence belongs to the HAK/KUP transporter (TC 2.A.72) family.

It is found in the cell membrane. The catalysed reaction is K(+)(in) + H(+)(in) = K(+)(out) + H(+)(out). In terms of biological role, transport of potassium into the cell. Likely operates as a K(+):H(+) symporter. This Streptococcus pyogenes serotype M3 (strain ATCC BAA-595 / MGAS315) protein is Probable potassium transport system protein Kup.